Here is a 610-residue protein sequence, read N- to C-terminus: 1,8-cineol synthase, chloroplastic (610 aa).

The N-terminal 51 residues, 1–51 (MNHHLIITPIFHLQIMLPVATLKRPPPPAATCSIYSFSRGTPSLVSKARLS), are a transit peptide targeting the chloroplast. (2E)-geranyl diphosphate is bound by residues arginine 322, aspartate 359, aspartate 363, arginine 500, and asparagine 503. Mg(2+)-binding residues include aspartate 359 and aspartate 363. Positions 359–363 (DDVYD) match the DDXXD motif motif. Mg(2+) is bound by residues asparagine 503, threonine 507, and glutamate 511.

It belongs to the terpene synthase family. Tpsb subfamily. As to quaternary structure, monomer. Mg(2+) is required as a cofactor. The cofactor is Mn(2+). Confined to buds and flowers.

Its subcellular location is the plastid. It localises to the chloroplast. The catalysed reaction is (2E)-geranyl diphosphate + H2O = 1,8-cineole + diphosphate. It catalyses the reaction (2E)-geranyl diphosphate = limonene + diphosphate. The enzyme catalyses (2E)-geranyl diphosphate = sabinene + diphosphate. It carries out the reaction (2E)-geranyl diphosphate = (E)-beta-ocimene + diphosphate. The catalysed reaction is (2E)-geranyl diphosphate = beta-myrcene + diphosphate. It catalyses the reaction (2E)-geranyl diphosphate = alpha-pinene + diphosphate. The enzyme catalyses (2E)-geranyl diphosphate + H2O = (S)-alpha-terpineol + diphosphate. The protein operates within secondary metabolite biosynthesis; terpenoid biosynthesis. Its function is as follows. Monoterpene synthase involved in the biosynthesis of monoterpene natural products of the 'cineole cassette', volatile compounds present in floral scent. Catalyzes the conversion of (2E)-geranyl diphosphate (GPP) into 1,8-cineole and, as minor products, limonene, sabinene, (E)-beta-ocimene, beta-myrcene, alpha-pinene and alpha-terpineol. This is 1,8-cineol synthase, chloroplastic from Nicotiana suaveolens (Australian tobacco).